The sequence spans 1537 residues: Adhesion G protein-coupled receptor L3 (1537 aa).

The signal sequence occupies residues 1–19 (MWPPQLLILTMLLAPVVHG). The Extracellular segment spans residues 20-943 (GKHNERHPAL…VKHSDAVHDL (924 aa)). Residues 53–80 (PAAERSTAHRGQGPRGAARGVRGPGAPG) are disordered. Residues 103–192 (SCESYPIELR…KYLEVQYECV (90 aa)) form the SUEL-type lectin domain. Disulfide bonds link cysteine 104–cysteine 134, cysteine 113–cysteine 191, cysteine 146–cysteine 178, cysteine 159–cysteine 165, and cysteine 203–cysteine 385. N-linked (GlcNAc...) asparagine glycosylation occurs at asparagine 161. The Olfactomedin-like domain occupies 202–461 (LCPGLLKGVY…VVKYSLDFGP (260 aa)). Positions 317 to 347 (YHDTSPYRWGGKSDIDLAVDENGLWVIYATE) are interaction with FLRT3. Ca(2+) is bound by residues aspartate 332, asparagine 380, alanine 381, and valine 435. The disordered stretch occupies residues 521–540 (RSTTASLPGRRNRSTSTPSP). N-linked (GlcNAc...) asparagine glycans are attached at residues asparagine 532, asparagine 617, asparagine 827, asparagine 840, asparagine 885, and asparagine 911. One can recognise a GAIN-B domain in the interval 756 to 935 (DIVRENTDNI…AVLMAHVEVK (180 aa)). 2 disulfide bridges follow: cysteine 886–cysteine 917 and cysteine 905–cysteine 919. The interval 886–935 (CSFWSYSKRTMTGYWSTQGCRLLTTNKTHTTCSCNHLTNFAVLMAHVEVK) is GPS. The stachel stretch occupies residues 923–939 (TNFAVLMAHVEVKHSDA). The helical transmembrane segment at 944 to 969 (LLDVITWVGILLSLVCLLICIFTFCF) threads the bilayer. Residues 970–975 (FRGLQS) are Cytoplasmic-facing. A helical transmembrane segment spans residues 976-999 (DRNTIHKNLCISLFVAELLFLIGI). N-linked (GlcNAc...) asparagine glycosylation is present at asparagine 1000. Residues 1000-1006 (NRTDQPI) are Extracellular-facing. A helical transmembrane segment spans residues 1007-1034 (ACAVFAALLHFFFLAAFTWMFLEGVQLY). The cysteines at positions 1008 and 1080 are disulfide-linked. Residues 1035-1048 (IMLVEVFESEHSRR) are Cytoplasmic-facing. A helical membrane pass occupies residues 1049–1071 (KYFYLVGYGMPALIVAVSAAVDY). Residues 1072–1086 (RSYGTDKVCWLRLDT) are Extracellular-facing. The helical transmembrane segment at 1087–1112 (YFIWSFIGPATLIIMLNVIFLGIALY) threads the bilayer. Topologically, residues 1113-1142 (KMFHHTAILKPESGCLDNINYEDNRPFIKS) are cytoplasmic. A helical membrane pass occupies residues 1143-1163 (WVIGAIALLCLLGLTWAFGLM). Residues 1164–1168 (YINES) are Extracellular-facing. The N-linked (GlcNAc...) asparagine glycan is linked to asparagine 1166. Residues 1169–1195 (TVIMAYLFTIFNSLQGMFIFIFHCVLQ) traverse the membrane as a helical segment. The Cytoplasmic segment spans residues 1196–1537 (KKVRKEYGKC…KGPAHLVTSL (342 aa)). Residues 1213-1237 (GKSTESSIGSGKTSGSRTPGRYSTG) form a disordered region. Residues serine 1254 and serine 1522 each carry the phosphoserine modification. The interval 1512–1537 (FIVPPNKDGASPEGTSKGPAHLVTSL) is disordered. The PDZ-binding motif lies at 1532–1537 (HLVTSL).

It belongs to the G-protein coupled receptor 2 family. LN-TM7 subfamily. In terms of assembly, heterodimer of 2 chains generated by proteolytic processing; the large extracellular N-terminal fragment and the membrane-bound C-terminal fragment predominantly remain associated and non-covalently linked. Interacts (via olfactomedin-like domain) with FLRT1 (via extracellular domain). Interacts (via olfactomedin-like domain) with FLRT2 (via extracellular domain). Interacts (via olfactomedin-like domain) with FLRT3 (via extracellular domain); the interaction is direct. Interacts (via extracellular domain) with TENM1. Interacts (via extracellular domain) with TENM2. Interacts (via extracellular domain) with TENM3. Identified in a complex with FLRT3 and UNC5B; does not interact with UNC5B by itself. Identified in a complex with FLRT3 and UNC5D; does not interact with UNC5D by itself. Interacts (via PDZ-binding motif) with SHANK3. Interacts (via PDZ-binding motif) with DLG4. In terms of processing, autoproteolytically processed at the GPS region of the GAIN-B domain; this cleavage modulates receptor activity. Post-translationally, O-glycosylated (major) and N-glycosylated. Localizes to postsynaptic spines in non-overlapping dendritic domains of CA1-region pyramidal neurons: specifically localizes to excitatory synapses in the S.oriens and S.radiatum, corresponding to distinct presynaptic inputs onto CA1-region pyramidal neurons.

It is found in the cell membrane. It localises to the postsynaptic cell membrane. Its subcellular location is the cell projection. The protein localises to the axon. The protein resides in the cell junction. Forms a heterodimer of 2 chains generated by proteolytic processing that remain associated through non-covalent interactions mediated by the GAIN-B domain. In the inactivated receptor, the Stachel sequence (also named stalk) is embedded in the GAIN-B domain, where it adopts a beta-strand conformation. On activation, the Stachel moves into the 7 transmembrane region and adopts a twisted hook-shaped configuration that forms contacts within the receptor, leading to coupling of a G-alpha protein, which activates signaling. The cleaved GAIN-B and N-terminal domains can then dissociate from the rest of the receptor. Its function is as follows. Orphan adhesion G-protein coupled receptor (aGPCR), which mediates synapse specificity. Ligand binding causes a conformation change that triggers signaling via guanine nucleotide-binding proteins (G proteins) and modulates the activity of downstream effectors. ADGRL3 is coupled with different classes of G alpha proteins, such as G(12)/G(13), G(s), G(i) or G(q), depending on the context. Coupling to G(12)/G(13) G proteins, which mediates the activation Rho small GTPases is the most efficient. Following G-protein coupled receptor activation, associates with cell adhesion molecules that are expressed at the surface of adjacent cells to direct synapse specificity. Specifically mediates the establishment of Schaffer-collateral synapses formed by CA3-region axons on CA1-region pyramidal neurons in the hippocampus. Localizes to postsynaptic spines in excitatory synapses in the S.oriens and S.radiatum and interacts with presynaptic cell adhesion molecules FLRT3 and TENM2, promoting synapse formation. Plays a role in the development of glutamatergic synapses in the cortex. Important in determining the connectivity rates between the principal neurons in the cortex. Orphan adhesion G-protein coupled receptor (aGPCR), which mediates synapse specificity. Ligand binding causes a conformation change that triggers signaling via guanine nucleotide-binding proteins (G proteins) and modulates the activity of downstream effectors, such as adenylate cyclase. Isoform 1 is specifically coupled to G(s) G proteins and mediates activation of adenylate cyclase activity. Following G-protein coupled receptor activation, undergoes liquid-liquid phase transition, associates with (1) cell adhesion molecules that are expressed at the surface of adjacent cells, as well as (2) PDZ-containing proteins, such as SHANK3 and DLG4, in the cytoplasm to direct synapse formation. Functionally, orphan adhesion G-protein coupled receptor (aGPCR). Ligand binding causes a conformation change that triggers signaling via guanine nucleotide-binding proteins (G proteins) and modulates the activity of downstream effectors, such as RhoA pathway. Isoform 7 is coupled to G(12) and/or G(13) G proteins (GNA12 and GNA13, respectively) and mediates the activation Rho small GTPases. The protein is Adhesion G protein-coupled receptor L3 of Mus musculus (Mouse).